A 331-amino-acid polypeptide reads, in one-letter code: Malate dehydrogenase (331 aa).

14–20 lines the NAD(+) pocket; the sequence is GAAGSIG. Residues Arg95 and Arg101 each coordinate substrate. Residues Asn108, Gln115, and 132-134 contribute to the NAD(+) site; that span reads VGN. Substrate is bound by residues Asn134 and Arg165. His190 serves as the catalytic Proton acceptor.

This sequence belongs to the LDH/MDH superfamily. MDH type 2 family.

The catalysed reaction is (S)-malate + NAD(+) = oxaloacetate + NADH + H(+). In terms of biological role, catalyzes the reversible oxidation of malate to oxaloacetate. This chain is Malate dehydrogenase, found in Rhodococcus opacus (strain B4).